The following is a 177-amino-acid chain: DELTA-stichotoxin-Hmg2b (177 aa).

A plays an important role in the hemolytic activity region spans residues 3-12 (ALAGTIIAGA). Residues 11 to 30 (GASLGFQILDKVLGELGKVS) are N-terminal region. Serine 54, valine 87, serine 105, proline 107, tyrosine 133, tyrosine 137, and tyrosine 138 together coordinate phosphocholine.

It belongs to the actinoporin family. Sea anemone subfamily. Octamer or nonamer in membranes. Monomer in the soluble state.

It localises to the secreted. The protein localises to the nematocyst. The protein resides in the target cell membrane. Functionally, pore-forming protein that forms cations-selective hydrophilic pores of around 1 nm and causes cytolysis. Pore formation is a multi-step process that involves specific recognition of membrane sphingomyelin (but neither cholesterol nor phosphatidylcholine) using aromatic rich region and adjacent phosphocholine (POC) binding site, firm binding to the membrane (mainly driven by hydrophobic interactions) accompanied by the transfer of the N-terminal region to the lipid-water interface and finally pore formation after oligomerization of monomers This toxin shows hemolytic activity. This chain is DELTA-stichotoxin-Hmg2b, found in Heteractis magnifica (Magnificent sea anemone).